The following is a 250-amino-acid chain: 5'-nucleotidase SurE (250 aa).

Residues D9, D10, S40, and N92 each coordinate a divalent metal cation.

It belongs to the SurE nucleotidase family. A divalent metal cation is required as a cofactor.

It is found in the cytoplasm. It carries out the reaction a ribonucleoside 5'-phosphate + H2O = a ribonucleoside + phosphate. Nucleotidase that shows phosphatase activity on nucleoside 5'-monophosphates. This is 5'-nucleotidase SurE from Shewanella pealeana (strain ATCC 700345 / ANG-SQ1).